The following is a 550-amino-acid chain: Phospholipase B-like 1 (550 aa).

Residues 1 to 39 form the signal peptide; sequence MCHRSHGRSLRPPSPLLLLLPLLLQSPWAAGAAEKHNSA. N-linked (GlcNAc...) (high mannose) asparagine; alternate glycosylation is present at Asn72. The N-linked (GlcNAc...) (hybrid) asparagine; alternate glycan is linked to Asn72. The propeptide at 210–228 is removed in mature form; the sequence is LSPTKSSSLKKFKIWEMGH. 2 N-linked (GlcNAc...) (high mannose) asparagine; alternate glycosylation sites follow: Asn309 and Asn412. N-linked (GlcNAc...) (hybrid) asparagine; alternate glycosylation is found at Asn309 and Asn412. 2 cysteine pairs are disulfide-bonded: Cys471–Cys476 and Cys475–Cys490. Asn527 carries an N-linked (GlcNAc...) (high mannose) asparagine; alternate glycan. The N-linked (GlcNAc...) (hybrid) asparagine; alternate glycan is linked to Asn527.

This sequence belongs to the phospholipase B-like family. As to quaternary structure, may form a homodimer, each monomer is composed of a chain A and a chain B. The maturation cleavages that produces chains A and B are required to open the putative substrate binding pocket. Both chains A and B remain associated in the mature protein.

It localises to the lysosome. Exhibits weak phospholipase activity, acting on various phospholipids, including phosphatidylcholine, phosphatidylinositol, phosphatidylethanolamine and lysophospholipids. However, in view of the small size of the putative binding pocket, it has been proposed that it may act rather as an amidase or a peptidase. This Rattus norvegicus (Rat) protein is Phospholipase B-like 1 (Plbd1).